A 90-amino-acid polypeptide reads, in one-letter code: DNA-binding protein HU-alpha (90 aa).

This sequence belongs to the bacterial histone-like protein family. As to quaternary structure, heterodimer of an alpha and a beta chain.

Histone-like DNA-binding protein which is capable of wrapping DNA to stabilize it, and thus to prevent its denaturation under extreme environmental conditions. The polypeptide is DNA-binding protein HU-alpha (hupA) (Escherichia coli O157:H7).